A 238-amino-acid chain; its full sequence is Flagellar L-ring protein (238 aa).

Residues 1-23 (MIKLFICQKKYYLTAIFLLTIQS) form the signal peptide. C24 is lipidated: N-palmitoyl cysteine. A lipid anchor (S-diacylglycerol cysteine) is attached at C24.

Belongs to the FlgH family. As to quaternary structure, the basal body constitutes a major portion of the flagellar organelle and consists of four rings (L,P,S, and M) mounted on a central rod.

It is found in the cell outer membrane. It localises to the bacterial flagellum basal body. Assembles around the rod to form the L-ring and probably protects the motor/basal body from shearing forces during rotation. This Buchnera aphidicola subsp. Acyrthosiphon pisum (strain 5A) protein is Flagellar L-ring protein.